The primary structure comprises 236 residues: Pyridoxal phosphate homeostasis protein (236 aa).

N6-(pyridoxal phosphate)lysine is present on Lys-36.

This sequence belongs to the pyridoxal phosphate-binding protein YggS/PROSC family.

In terms of biological role, pyridoxal 5'-phosphate (PLP)-binding protein, which is involved in PLP homeostasis. In Vibrio cholerae serotype O1 (strain ATCC 39315 / El Tor Inaba N16961), this protein is Pyridoxal phosphate homeostasis protein.